Here is a 182-residue protein sequence, read N- to C-terminus: Adenine phosphoribosyltransferase (182 aa).

It belongs to the purine/pyrimidine phosphoribosyltransferase family. As to quaternary structure, homodimer.

The protein localises to the cytoplasm. The enzyme catalyses AMP + diphosphate = 5-phospho-alpha-D-ribose 1-diphosphate + adenine. It participates in purine metabolism; AMP biosynthesis via salvage pathway; AMP from adenine: step 1/1. Its function is as follows. Catalyzes a salvage reaction resulting in the formation of AMP, that is energically less costly than de novo synthesis. This Campylobacter concisus (strain 13826) protein is Adenine phosphoribosyltransferase.